The following is a 569-amino-acid chain: Cysteine--tRNA ligase CPS1 homolog, chloroplastic/mitochondrial (569 aa).

The N-terminal 42 residues, 1–42 (MAAARRAAGLLPLLLSSPSRARLPHRQALALTPPLLRPHRLY), are a transit peptide targeting the chloroplast and mitochondrion. Cys99 serves as a coordination point for Zn(2+). The 'HIGH' region motif lies at 101-111 (VTPYDDSHIGH). Residues Cys279, His304, and Glu308 each coordinate Zn(2+). The 'KMSKS' region signature appears at 336 to 340 (KMSKS). Lys339 is an ATP binding site.

This sequence belongs to the class-I aminoacyl-tRNA synthetase family. The cofactor is Zn(2+).

It localises to the plastid. The protein resides in the chloroplast. The protein localises to the mitochondrion. The catalysed reaction is tRNA(Cys) + L-cysteine + ATP = L-cysteinyl-tRNA(Cys) + AMP + diphosphate. Its function is as follows. Nuclear genome-encoded factor required for normal assembly of chloroplast polysomes. The polypeptide is Cysteine--tRNA ligase CPS1 homolog, chloroplastic/mitochondrial (Oryza sativa subsp. japonica (Rice)).